Consider the following 299-residue polypeptide: Ornithine carbamoyltransferase (299 aa).

Carbamoyl phosphate-binding positions include 52 to 55, glutamine 79, arginine 103, and 130 to 133; these read STRT and HPCQ. L-ornithine contacts are provided by residues asparagine 161, aspartate 218, and 222 to 223; that span reads SM. Residues 258–259 and arginine 286 contribute to the carbamoyl phosphate site; that span reads CL.

This sequence belongs to the aspartate/ornithine carbamoyltransferase superfamily. OTCase family.

It localises to the cytoplasm. It carries out the reaction carbamoyl phosphate + L-ornithine = L-citrulline + phosphate + H(+). It participates in amino-acid biosynthesis; L-arginine biosynthesis; L-arginine from L-ornithine and carbamoyl phosphate: step 1/3. Reversibly catalyzes the transfer of the carbamoyl group from carbamoyl phosphate (CP) to the N(epsilon) atom of ornithine (ORN) to produce L-citrulline. The sequence is that of Ornithine carbamoyltransferase from Ruthia magnifica subsp. Calyptogena magnifica.